The following is a 504-amino-acid chain: Maturase K (504 aa).

It belongs to the intron maturase 2 family. MatK subfamily.

The protein resides in the plastid. It is found in the chloroplast. Usually encoded in the trnK tRNA gene intron. Probably assists in splicing its own and other chloroplast group II introns. This Cucumis sativus (Cucumber) protein is Maturase K.